We begin with the raw amino-acid sequence, 879 residues long: Alanine--tRNA ligase (879 aa).

Zn(2+)-binding residues include histidine 566, histidine 570, cysteine 668, and histidine 672.

This sequence belongs to the class-II aminoacyl-tRNA synthetase family. Requires Zn(2+) as cofactor.

It localises to the cytoplasm. The enzyme catalyses tRNA(Ala) + L-alanine + ATP = L-alanyl-tRNA(Ala) + AMP + diphosphate. Its function is as follows. Catalyzes the attachment of alanine to tRNA(Ala) in a two-step reaction: alanine is first activated by ATP to form Ala-AMP and then transferred to the acceptor end of tRNA(Ala). Also edits incorrectly charged Ser-tRNA(Ala) and Gly-tRNA(Ala) via its editing domain. The chain is Alanine--tRNA ligase from Clostridium tetani (strain Massachusetts / E88).